The sequence spans 332 residues: Glycerol-3-phosphate dehydrogenase [NAD(P)+] (332 aa).

NADPH-binding residues include Trp-13, Arg-33, and Lys-105. Lys-105, Gly-134, and Ser-136 together coordinate sn-glycerol 3-phosphate. Ala-138 is a binding site for NADPH. Positions 189, 242, 252, 253, and 254 each coordinate sn-glycerol 3-phosphate. The active-site Proton acceptor is Lys-189. Arg-253 provides a ligand contact to NADPH. Residue Glu-279 participates in NADPH binding.

The protein belongs to the NAD-dependent glycerol-3-phosphate dehydrogenase family.

The protein resides in the cytoplasm. The catalysed reaction is sn-glycerol 3-phosphate + NAD(+) = dihydroxyacetone phosphate + NADH + H(+). The enzyme catalyses sn-glycerol 3-phosphate + NADP(+) = dihydroxyacetone phosphate + NADPH + H(+). It participates in membrane lipid metabolism; glycerophospholipid metabolism. Functionally, catalyzes the reduction of the glycolytic intermediate dihydroxyacetone phosphate (DHAP) to sn-glycerol 3-phosphate (G3P), the key precursor for phospholipid synthesis. This chain is Glycerol-3-phosphate dehydrogenase [NAD(P)+], found in Halorhodospira halophila (strain DSM 244 / SL1) (Ectothiorhodospira halophila (strain DSM 244 / SL1)).